The sequence spans 444 residues: Phosphoglucosamine mutase (444 aa).

Ser104 serves as the catalytic Phosphoserine intermediate. Positions 104, 243, 245, and 247 each coordinate Mg(2+). A Phosphoserine modification is found at Ser104.

This sequence belongs to the phosphohexose mutase family. Mg(2+) serves as cofactor. In terms of processing, activated by phosphorylation.

It carries out the reaction alpha-D-glucosamine 1-phosphate = D-glucosamine 6-phosphate. Its function is as follows. Catalyzes the conversion of glucosamine-6-phosphate to glucosamine-1-phosphate. The polypeptide is Phosphoglucosamine mutase (Neisseria meningitidis serogroup A / serotype 4A (strain DSM 15465 / Z2491)).